We begin with the raw amino-acid sequence, 562 residues long: Lamassu protein LmuB (562 aa).

Component of antiviral defense system Lamassu type I, composed of LmuA and LmuB. Expression of Lamassu type I in B.subtilis (strain BEST7003) confers resistance to phages phi3T, SpBeta and SPR. May be an ATPase. This chain is Lamassu protein LmuB, found in Bacillus sp. (strain NCIM 5461 / CCTCC AB 2011126 / NIO-1130).